The chain runs to 226 residues: PKHD-type hydroxylase Pfl01_0799 (226 aa).

The 101-residue stretch at 78 to 178 folds into the Fe2OG dioxygenase domain; it reads KVFPPLLNCY…RYASFFWTQS (101 aa). Residues His96, Asp98, and His159 each contribute to the Fe cation site. Arg169 serves as a coordination point for 2-oxoglutarate.

It depends on Fe(2+) as a cofactor. Requires L-ascorbate as cofactor.

This Pseudomonas fluorescens (strain Pf0-1) protein is PKHD-type hydroxylase Pfl01_0799.